Consider the following 947-residue polypeptide: DNA polymerase (947 aa).

Belongs to the DNA polymerase type-B family.

The catalysed reaction is DNA(n) + a 2'-deoxyribonucleoside 5'-triphosphate = DNA(n+1) + diphosphate. The polypeptide is DNA polymerase (Red sea bream iridovirus (RSIV)).